Here is a 415-residue protein sequence, read N- to C-terminus: Protein ROH1A (415 aa).

Positions 184-219 are disordered; it reads VSGGGGGGGGGNKTTERSWSFGRRSGGSSAASKGGA. Over residues 185 to 195 the composition is skewed to gly residues; it reads SGGGGGGGGGN. Residues 200 to 219 are compositionally biased toward low complexity; sequence RSWSFGRRSGGSSAASKGGA. A helical membrane pass occupies residues 263–283; sequence MFIMSTVMVFVMWVLTAAVPC.

This sequence belongs to the ROH1 family. Interacts with EXO70A1 and EXO70C1. Binds to EXO70C2. In terms of tissue distribution, mainly expressed in cells expanding in a polar manner such as pollen and root hairs.

It is found in the membrane. The protein resides in the cytoplasm. It localises to the cytosol. In terms of biological role, required for seed coat mucilage deposition. In Arabidopsis thaliana (Mouse-ear cress), this protein is Protein ROH1A.